The following is a 111-amino-acid chain: Cornifelin homolog A (111 aa).

Belongs to the cornifelin family.

The protein is Cornifelin homolog A (cnfn-a) of Xenopus laevis (African clawed frog).